The primary structure comprises 796 residues: ATP-dependent DNA helicase PIF6 (796 aa).

Positions 197–230 (RPTGLPSAHSGGKLPKHMGGDELNPQLEGSTTPG) are disordered. 255-262 (GSAGTGKT) is an ATP binding site. The DNA-binding element occupies 636-655 (QAYVALSRVRSREDLMLTAF). Disordered stretches follow at residues 692–719 (KGKTRAKHPRSQGEKNSVDEGGNAPEEH) and 762–796 (TSSAIPNFTQESNNGDANSQLQHPFSQNNLMVDDD).

It belongs to the helicase family. PIF1 subfamily. As to quaternary structure, monomer. The cofactor is Mg(2+).

The protein resides in the nucleus. It carries out the reaction Couples ATP hydrolysis with the unwinding of duplex DNA at the replication fork by translocating in the 5'-3' direction. This creates two antiparallel DNA single strands (ssDNA). The leading ssDNA polymer is the template for DNA polymerase III holoenzyme which synthesizes a continuous strand.. It catalyses the reaction ATP + H2O = ADP + phosphate + H(+). Functionally, DNA-dependent ATPase and 5'-3' DNA helicase required for the maintenance of genome stability. The chain is ATP-dependent DNA helicase PIF6 from Trypanosoma brucei brucei (strain 927/4 GUTat10.1).